Consider the following 442-residue polypeptide: MASKAKTGRDDEATSAVELTEATESAVARTDGDSTTDTASKLGHHSFLSRLYTGTGAFEVVGRRRLWFGVSGAIVAVAIASIVFRGFTFGIDFKGGTTVSFPRGSTQVAQVEDVYYRALGSEPQSVVIVGAGASATVQIRSETLTSDQTAKLRDALFEAFGPKGTDGQPSKQAISDSAVSETWGGQITKKAVIALVVFLVLVALYITVRYERYMTISAITAMLFDLTVTAGVYSLVGFEVTPATVIGLLTILGFSLYDTVIVFDKVEENTHGFQHTTRRTFAEQANLAINQTFMRSINTSLIGVLPVLALMVVAVWLLGVGTLKDLALVQLIGIIIGTYSSIFFATPLLVTLRERTELVRNHTRRVLKRRNSGSPAGSEDASTDGGEQPAAADEQSLVGITQASSQSAPRAAQGSSKPAPGARPVRPVGTRRPTGKRNAGRR.

Residues 1 to 39 form a disordered region; it reads MASKAKTGRDDEATSAVELTEATESAVARTDGDSTTDTA. The next 6 helical transmembrane spans lie at 67–87, 187–207, 218–238, 243–263, 301–321, and 331–351; these read WFGVSGAIVAVAIASIVFRGF, ITKKAVIALVVFLVLVALYIT, AITAMLFDLTVTAGVYSLVGF, ATVIGLLTILGFSLYDTVIVF, LIGVLPVLALMVVAVWLLGVG, and LIGIIIGTYSSIFFATPLLVT. A disordered region spans residues 366-442; the sequence is VLKRRNSGSP…PTGKRNAGRR (77 aa). Low complexity predominate over residues 402–432; the sequence is QASSQSAPRAAQGSSKPAPGARPVRPVGTRR. The segment covering 433 to 442 has biased composition (basic residues); that stretch reads PTGKRNAGRR.

The protein belongs to the SecD/SecF family. SecF subfamily. As to quaternary structure, forms a complex with SecD. Part of the essential Sec protein translocation apparatus which comprises SecA, SecYEG and auxiliary proteins SecDF. Other proteins may also be involved.

It is found in the cell membrane. Functionally, part of the Sec protein translocase complex. Interacts with the SecYEG preprotein conducting channel. SecDF uses the proton motive force (PMF) to complete protein translocation after the ATP-dependent function of SecA. In Mycobacterium tuberculosis (strain ATCC 25618 / H37Rv), this protein is Protein translocase subunit SecF.